Here is a 381-residue protein sequence, read N- to C-terminus: Dual-specificity RNA methyltransferase RlmN (381 aa).

Glu96 functions as the Proton acceptor in the catalytic mechanism. Positions 102–342 constitute a Radical SAM core domain; it reads TDDRGTLCVS…TRTTRGDDID (241 aa). A disulfide bond links Cys109 and Cys345. Cys116, Cys120, and Cys123 together coordinate [4Fe-4S] cluster. S-adenosyl-L-methionine-binding positions include 170–171, Ser202, 224–226, and Asn302; these read GE and SLH. Catalysis depends on Cys345, which acts as the S-methylcysteine intermediate.

It belongs to the radical SAM superfamily. RlmN family. [4Fe-4S] cluster serves as cofactor.

The protein resides in the cytoplasm. The enzyme catalyses adenosine(2503) in 23S rRNA + 2 reduced [2Fe-2S]-[ferredoxin] + 2 S-adenosyl-L-methionine = 2-methyladenosine(2503) in 23S rRNA + 5'-deoxyadenosine + L-methionine + 2 oxidized [2Fe-2S]-[ferredoxin] + S-adenosyl-L-homocysteine. The catalysed reaction is adenosine(37) in tRNA + 2 reduced [2Fe-2S]-[ferredoxin] + 2 S-adenosyl-L-methionine = 2-methyladenosine(37) in tRNA + 5'-deoxyadenosine + L-methionine + 2 oxidized [2Fe-2S]-[ferredoxin] + S-adenosyl-L-homocysteine. Specifically methylates position 2 of adenine 2503 in 23S rRNA and position 2 of adenine 37 in tRNAs. m2A2503 modification seems to play a crucial role in the proofreading step occurring at the peptidyl transferase center and thus would serve to optimize ribosomal fidelity. The chain is Dual-specificity RNA methyltransferase RlmN from Pseudomonas putida (strain ATCC 700007 / DSM 6899 / JCM 31910 / BCRC 17059 / LMG 24140 / F1).